The following is a 527-amino-acid chain: BTB/POZ domain-containing protein At4g01160 (527 aa).

The BTB domain maps to 111–180; it reads NNNTSVLSVQ…MYSNSLSVTA (70 aa). The 95-residue stretch at 233–327 folds into the BACK domain; it reads VKPLTNAARQ…HMTTDRLKKI (95 aa).

The protein operates within protein modification; protein ubiquitination. Its function is as follows. May act as a substrate-specific adapter of an E3 ubiquitin-protein ligase complex (CUL3-RBX1-BTB) which mediates the ubiquitination and subsequent proteasomal degradation of target proteins. The polypeptide is BTB/POZ domain-containing protein At4g01160 (Arabidopsis thaliana (Mouse-ear cress)).